Here is a 957-residue protein sequence, read N- to C-terminus: SH3 domain-binding protein 4-B (957 aa).

The region spanning 54-113 (ENVKEVVAIKDYCPNNFTTLKFSKGEHLYVLDASGGDWWYAHNTTEMGYIPSSYVQPLNY) is the SH3 1 domain. The 138-residue stretch at 312–449 (TSIVCRLDSS…LEPVMYVVMV (138 aa)) folds into the ZU5 domain. The region spanning 649–719 (TSLKYGKLIK…HAKNVLVVGK (71 aa)) is the SH3 2 domain.

As to quaternary structure, homodimer or homooligomer.

The protein resides in the membrane. The protein localises to the clathrin-coated pit. It localises to the cytoplasmic vesicle. Its subcellular location is the clathrin-coated vesicle. It is found in the nucleus. In terms of biological role, possible role in regulating endocytosis of the transferrin receptor at the plasma membrane. Alternatively, may function as a negative regulator of the amino acid-induced TOR signaling by inhibiting the formation of active Rag GTPase complexes. Preferentially binds inactive Rag GTPase complexes and prevents their interaction with the mTORC1 complex inhibiting its relocalization to lysosomes and its activation. Thereby, may indirectly regulate cell growth, proliferation and autophagy. The protein is SH3 domain-binding protein 4-B (sh3bp4-b) of Xenopus laevis (African clawed frog).